The chain runs to 73 residues: Large ribosomal subunit protein uL29 (73 aa).

Belongs to the universal ribosomal protein uL29 family.

The protein is Large ribosomal subunit protein uL29 (rpmC) of Synechocystis sp. (strain ATCC 27184 / PCC 6803 / Kazusa).